A 139-amino-acid chain; its full sequence is Short neuropeptide F (139 aa).

A propeptide spanning residues 1–23 (MGRARRTVRAPAQHDALGGHALA) is cleaved from the precursor. The disordered stretch occupies residues 1–48 (MGRARRTVRAPAQHDALGGHALARKSVRSPSRRLRFGRRSDPDMPPQA). Residues 22–37 (LARKSVRSPSRRLRFG) show a composition bias toward basic residues. Phe36 carries the phenylalanine amide modification. Positions 40-62 (SDPDMPPQAPLDEMNELLSLREV) are excised as a propeptide. Phenylalanine amide is present on Phe70. Residues 74–96 (SEERAVPHIFPQEFLTQEQDRAV) constitute a propeptide that is removed on maturation. Phe105 carries the phenylalanine amide modification. Residues 109–139 (SDNNMFLLPYESALPQEVKANGSVEDDRQQE) constitute a propeptide that is removed on maturation.

It belongs to the NPY family. SNPF peptide 1: Expressed in corpora cardiaca (CC), corpora allata (CA), antennal lobe (AL) and gnathal ganglion (GNG) (at protein level). Expression in AL detected in all animals, in GNG in most animals, expression in CC and CA in some animals (at protein level). sNPF peptide 2: Expressed in corpora cardiaca (CC), corpora allata (CA), antennal lobe (AL) and gnathal ganglion (GNG) (at protein level). Expression in AL detected in all animals, in GNG, CC and CA in most animals (at protein level). sNPF peptide 3: Expressed in corpora cardiaca (CC), corpora allata (CA), antennal lobe (AL) and gnathal ganglion (GNG) (at protein level). Expression detected in all animals (at protein level).

It localises to the secreted. Plays a role in controlling food intake and regulating body size. The protein is Short neuropeptide F of Agrotis ipsilon (Black cutworm moth).